The primary structure comprises 28 residues: Short cationic peptide-1b (28 aa).

Residue glutamate 28 is modified to Glutamic acid 1-amide.

Expressed by the venom gland.

Its subcellular location is the secreted. This chain is Short cationic peptide-1b, found in Cupiennius salei (American wandering spider).